Here is a 765-residue protein sequence, read N- to C-terminus: E3 ubiquitin-protein ligase SlrP (765 aa).

Residues 1–451 form an interaction with target proteins region; the sequence is MFNITNIQST…VDYQGPRVLF (451 aa). LRR repeat units follow at residues 200 to 219, 221 to 242, 243 to 262, 263 to 284, 285 to 305, 306 to 325, 326 to 346, 347 to 368, 369 to 389, and 390 to 410; these read QITT…ENLQ, NIKT…LPDT, IQEM…RLPS, ALQS…LPEE, LRYL…LPSG, ITHL…TLPP, GLKT…SLPP, ELQV…LPPT, ITTL…LPAA, and LQIM…LPHF. Positions 452–461 are linker; that stretch reads AMGDFSIVRV. Residues 462–765 form an E3 ubiquitin-protein ligase catalytic domain region; sequence TRPLHQAVQG…VSSLMSAYWR (304 aa). Residues 464–758 form the NEL domain; that stretch reads PLHQAVQGWL…NILLKKEVSS (295 aa). The active-site Glycyl thioester intermediate is Cys546.

Belongs to the LRR-containing bacterial E3 ligase family. Interacts with host TXN. In terms of processing, ubiquitinated in the presence of host E1 ubiquitin-activating enzyme, E2 ubiquitin-conjugating enzyme and ubiquitin.

Its subcellular location is the secreted. The protein resides in the host cytoplasm. It carries out the reaction S-ubiquitinyl-[E2 ubiquitin-conjugating enzyme]-L-cysteine + [acceptor protein]-L-lysine = [E2 ubiquitin-conjugating enzyme]-L-cysteine + N(6)-ubiquitinyl-[acceptor protein]-L-lysine.. With respect to regulation, binding to TXN is inhibited by hydrogen peroxide in vitro. Effector proteins function to alter host cell physiology and promote bacterial survival in host tissues. This protein is an E3 ubiquitin ligase that interferes with host's ubiquitination pathway. Can ubiquitinate both ubiquitin and host TXN (thioredoxin). Leads to significant decrease of thioredoxin activity and increase of host cell death. This is E3 ubiquitin-protein ligase SlrP (slrP) from Salmonella typhimurium (strain LT2 / SGSC1412 / ATCC 700720).